A 466-amino-acid chain; its full sequence is Asparagine--tRNA ligase (466 aa).

It belongs to the class-II aminoacyl-tRNA synthetase family. In terms of assembly, homodimer.

The protein localises to the cytoplasm. It catalyses the reaction tRNA(Asn) + L-asparagine + ATP = L-asparaginyl-tRNA(Asn) + AMP + diphosphate + H(+). This chain is Asparagine--tRNA ligase, found in Xylella fastidiosa (strain Temecula1 / ATCC 700964).